The following is a 540-amino-acid chain: Signal peptide peptidase-like 3 (540 aa).

The first 28 residues, 1 to 28, serve as a signal peptide directing secretion; that stretch reads MSSFDPPNHRYSALVLILLLLGFSVAAA. Residues 29-194 are Lumenal-facing; sequence DDVSWTEDSS…LYAPKRPAVD (166 aa). The 75-residue stretch at 98 to 172 folds into the PA domain; that stretch reads SHLSSRLDGH…ISKSSGDALN (75 aa). N-linked (GlcNAc...) asparagine glycosylation is found at Asn-155 and Asn-172. A helical transmembrane segment spans residues 195–215; it reads LTAGLLLLMAVGTVVVASLWS. Residues 216-250 lie on the Cytoplasmic side of the membrane; sequence ELTDPDQANESYSILAKDVSSAGTRKDDPEKEILD. Residues 251-273 form a helical membrane-spanning segment; the sequence is ISVTGAVFFIVTASIFLLLLFYF. Over 274-276 the chain is Lumenal; sequence MSS. The chain crosses the membrane as a helical span at residues 277 to 299; sequence WFVWVLTIFFCIGGMQGMHNIIM. Topologically, residues 300 to 321 are cytoplasmic; it reads AVILRKCRHLARKSVKLPLLGT. A helical transmembrane segment spans residues 322-342; sequence MSVLSLLVNIVCLAFAVFWFI. The Lumenal segment spans residues 343 to 347; sequence KRHTS. The chain crosses the membrane as a helical span at residues 348 to 368; it reads YSWVGQDILGICLMITALQVV. The Cytoplasmic segment spans residues 369-377; the sequence is RLPNIKVAT. The helical transmembrane segment at 378 to 398 threads the bilayer; that stretch reads VLLCCAFVYDIFWVFISPLIF. The active site involves Asp-387. At 399 to 429 the chain is on the lumenal side; the sequence is HESVMIVVAQGDSSTGESIPMLLRIPRFFDP. The chain crosses the membrane as a helical span at residues 430 to 450; sequence WGGYDMIGFGDILFPGLLISF. Asp-440 is a catalytic residue. At 451 to 466 the chain is on the cytoplasmic side; it reads ASRYDKIKKRVISNGY. Residues 467–487 form a helical membrane-spanning segment; that stretch reads FLWLTIGYGIGLLLTYLGLYL. The Lumenal segment spans residues 488–492; the sequence is MDGHG. The chain crosses the membrane as a helical span at residues 493-513; it reads QPALLYIVPCTLGLAVILGLV. Positions 494–496 match the PAL motif; that stretch reads PAL. Residues 514-540 lie on the Cytoplasmic side of the membrane; that stretch reads RGELKELWNYGIEESESHTPEDPMPVA.

The protein belongs to the peptidase A22B family. In terms of processing, glycosylated. In terms of tissue distribution, ubiquitous.

Its subcellular location is the endosome membrane. Functionally, intramembrane-cleaving aspartic protease (I-CLiP) that cleaves type II membrane signal peptides in the hydrophobic plane of the membrane. The protein is Signal peptide peptidase-like 3 (SPPL3) of Arabidopsis thaliana (Mouse-ear cress).